Here is a 568-residue protein sequence, read N- to C-terminus: Estrogen receptor beta-1 (568 aa).

A modulating region spans residues 12–169 (SEYAEGDSSL…SLRGKADMHY (158 aa)). NR C4-type zinc fingers lie at residues 170–190 (CAVCSDYASGYHYGVWSCEGC) and 206–230 (CPATNQCTIDKNRRKSCQACRLRKC). Residues 170 to 235 (CAVCSDYASG…RLRKCYEVGM (66 aa)) constitute a DNA-binding region (nuclear receptor). The NR LBD domain maps to 292-528 (SPEELIARIM…DLLLEMLDAH (237 aa)).

Belongs to the nuclear hormone receptor family. NR3 subfamily. As to quaternary structure, binds DNA as a homodimer. Can form a heterodimer with ER-alpha.

It localises to the nucleus. Its function is as follows. Binds estrogens with an affinity similar to that of ER-alpha, and activates expression of reporter genes containing estrogen response elements (ERE) in an estrogen-dependent manner. This is Estrogen receptor beta-1 (esr2a) from Carassius auratus (Goldfish).